The primary structure comprises 605 residues: Ubiquitin carboxyl-terminal hydrolase 2 (605 aa).

The segment at 1–200 (MSQLSSTLKR…CPEYLVDYLE (200 aa)) is necessary for interaction with MDM4. Disordered stretches follow at residues 71 to 107 (LLDYDRGRPLLRPDITGGGKRAESQTRGTERPLGSGL) and 237 to 264 (WETGKGQAPGPSRSSSPGRDGMNSKSAQ). The span at 90–100 (KRAESQTRGTE) shows a compositional bias: basic and acidic residues. The span at 245-255 (PGPSRSSSPGR) shows a compositional bias: low complexity. A USP domain is found at 267–599 (AGLRNLGNTC…DAYLLFYELA (333 aa)). C276 (nucleophile) is an active-site residue. The interval 403 to 503 (YLEREDSRIG…FPKILVLHLK (101 aa)) is necessary for interaction with MDM4. Zn(2+) is bound by residues C425, C428, C476, and C479. The active-site Proton acceptor is H557.

It belongs to the peptidase C19 family. USP2 subfamily. As to quaternary structure, homooligomer. Found in trimeric complex with MDM2 and MDM4 and USP2. Interacts with CCND1; the interaction is direct and promotes its stabilization by antagonizing ubiquitin-dependent degradation. Interacts (via N-terminus and C-terminus) with MDM2. Interacts with MDM4. Interacts with PER1. Interacts with KCNQ1; counteracts the NEDD4L-specific down-regulation of I(Ks) and restore plasma membrane localization of KCNQ1. Isoform 4: Interacts with NHERF4 and CLTC. In terms of tissue distribution, expressed in mesangial cells of the kidney and in different types of glomerulonephritides (at protein level).

It is found in the cytoplasm. It localises to the perinuclear region. Its subcellular location is the nucleus. The protein localises to the membrane. The enzyme catalyses Thiol-dependent hydrolysis of ester, thioester, amide, peptide and isopeptide bonds formed by the C-terminal Gly of ubiquitin (a 76-residue protein attached to proteins as an intracellular targeting signal).. Its activity is regulated as follows. Cleavage is inhibited by ubiquitin in a dosage-dependent manner. Cleavage is blocked by ubiquitin aldehyde. Functionally, hydrolase that deubiquitinates polyubiquitinated target proteins such as MDM2, MDM4 and CCND1. Isoform 1 and isoform 4 possess both ubiquitin-specific peptidase and isopeptidase activities. Deubiquitinates MDM2 without reversing MDM2-mediated p53/TP53 ubiquitination and thus indirectly promotes p53/TP53 degradation and limits p53 activity. Has no deubiquitinase activity against p53/TP53. Prevents MDM2-mediated degradation of MDM4. Plays a role in the G1/S cell-cycle progression in normal and cancer cells. Regulates the circadian clock by modulating its intrinsic circadian rhythm and its capacity to respond to external cues. Associates with clock proteins and deubiquitinates core clock component PER1 but does not affect its overall stability. Regulates the nucleocytoplasmic shuttling and nuclear retention of PER1 and its repressive role on the clock transcription factors CLOCK and BMAL1. Plays a role in the regulation of myogenic differentiation of embryonic muscle cells. Its function is as follows. Circadian clock output effector that regulates Ca(2+) absorption in the small intestine. Probably functions by regulating protein levels of the membrane scaffold protein NHERF4 in a rhythmic manner, and is therefore likely to control Ca(2+) membrane permeability mediated by the Ca(2+) channel TRPV6 in the intestine. This chain is Ubiquitin carboxyl-terminal hydrolase 2 (USP2), found in Homo sapiens (Human).